The sequence spans 556 residues: Delta-1-pyrroline-5-carboxylate dehydrogenase, mitochondrial (556 aa).

The N-terminal 17 residues, 1 to 17, are a transit peptide targeting the mitochondrion; it reads MLRARSAVSQSWKGFKT. NAD(+)-binding positions include K226 and 279 to 283; that span reads GSVPT. The active-site Proton acceptor is E307. The active-site Nucleophile is the C341. E440 is an NAD(+) binding site. A substrate-binding site is contributed by S506.

This sequence belongs to the aldehyde dehydrogenase family.

The protein localises to the mitochondrion matrix. The catalysed reaction is L-glutamate 5-semialdehyde + NAD(+) + H2O = L-glutamate + NADH + 2 H(+). Its pathway is amino-acid degradation; L-proline degradation into L-glutamate; L-glutamate from L-proline: step 2/2. Functionally, irreversible conversion of delta-1-pyrroline-5-carboxylate (P5C), derived either from proline or ornithine, to glutamate. This is a necessary step in the pathway interconnecting the urea and tricarboxylic acid cycles. The chain is Delta-1-pyrroline-5-carboxylate dehydrogenase, mitochondrial (aldh4a1) from Danio rerio (Zebrafish).